Here is a 440-residue protein sequence, read N- to C-terminus: Chromosome partition protein MukF (440 aa).

The tract at residues 208-236 (LSETSGTLRELQDTLEAAGDKLQANLLRI) is leucine-zipper.

This sequence belongs to the MukF family. Interacts, and probably forms a ternary complex, with MukE and MukB via its C-terminal region. The complex formation is stimulated by calcium or magnesium. It is required for an interaction between MukE and MukB.

Its subcellular location is the cytoplasm. It localises to the nucleoid. In terms of biological role, involved in chromosome condensation, segregation and cell cycle progression. May participate in facilitating chromosome segregation by condensation DNA from both sides of a centrally located replisome during cell division. Not required for mini-F plasmid partitioning. Probably acts via its interaction with MukB and MukE. Overexpression results in anucleate cells. It has a calcium binding activity. This chain is Chromosome partition protein MukF, found in Salmonella arizonae (strain ATCC BAA-731 / CDC346-86 / RSK2980).